Reading from the N-terminus, the 975-residue chain is Protein HIRA (975 aa).

7 WD repeats span residues 10 to 50, 64 to 103, 123 to 162, 165 to 204, 214 to 256, 259 to 331, and 335 to 374; these read RHEG…KDND, DHFGTVNCVRWAHHGRYLASGSDDQVIQIHERKAGTGTSE, GHTADVVDLNWSPDDSTLASGSLDNTVHIWSMANGICTAV, GHSSLVKGVTWDPIGSFIASQSDDKTVIIWRTSDWSLAHR, GSTF…ATFD, GHNA…PLFV, and FFTQSVVDLSWSPDGYSLFACSLDGSVATFHFEAKELGYR. A compositionally biased stretch (low complexity) spans 418-433; sequence KKVSSVQQFQSPPKVS. Disordered stretches follow at residues 418–510 and 948–975; these read KKVS…RSQN and NVEQMDVTPTPPPPPPAAATEGNNNGAS. A compositionally biased stretch (polar residues) spans 435-445; that stretch reads DAPNPSTSVPN. Positions 478-492 are enriched in basic and acidic residues; that stretch reads KQREYRRPDGRKRII. Over residues 499–510 the composition is skewed to polar residues; the sequence is PSNQDMSNRSQN. Residues 923–954 adopt a coiled-coil conformation; sequence ATNRKVQRLLNEFMDLLSEYEAAETNVEQMDV.

It belongs to the WD repeat HIR1 family.

The protein resides in the nucleus. In terms of biological role, histone chaperone involved in maintining knox genes silencing throughout leaf development. This is Protein HIRA from Oryza sativa subsp. japonica (Rice).